Here is a 1352-residue protein sequence, read N- to C-terminus: Alpha-protein kinase 1 (1352 aa).

The Arf-GAP domain occupies 7 to 127 (DPNYGLLRSL…RWTSSLSTSD (121 aa)). The C4-type zinc finger occupies 25–48 (CAECNSANVPYVCIKLGVFICPTC). 6 disordered regions span residues 123-164 (LSTS…NNNN), 219-380 (TQSQ…PQHH), 424-445 (QQQQQSPISNPFTSNNNSNSEP), 457-484 (HNHHHHQQQQHHKQQQQQQQQQQNGNNS), 503-560 (FVEE…GGVS), and 619-658 (IINNQNNQNNNNNNNTNNVMISPSPSPNPFLPTPTSTNQN). The span at 237 to 246 (GFSPFNSPRS) shows a compositional bias: polar residues. Composition is skewed to low complexity over residues 268-287 (NNSNNNNNNNNNNNNGNNGN) and 298-318 (NNNNNNNNNTTTTTTTTNNNN). Polar residues-rich tracts occupy residues 329–352 (KTFSESGEYQNTNGNQQLSGSGNS) and 359–379 (HPTQSKSPSPSGTPHSLSPQH). The stretch at 393–429 (TTQQQLQQQQLQLQQQLQQQLQQQQQQQQQQQQQQQS) forms a coiled coil. 2 stretches are compositionally biased toward basic residues: residues 458–470 (NHHHHQQQQHHKQ) and 510–523 (HQHPHHLQHHRHHS). Positions 619 to 636 (IINNQNNQNNNNNNNTNN) are enriched in low complexity. A coiled-coil region spans residues 689-781 (YIQQQQQQQQ…QQQQQQHINL (93 aa)). 2 disordered regions span residues 786-863 (PLQS…TDED) and 901-979 (TSPI…PDAR). The segment covering 799 to 812 (PQHSSSQYMNQQGY) has biased composition (polar residues). A compositionally biased stretch (low complexity) spans 821-859 (QPQSPQQIQPQPLQQQIFQQVQQQQPQIPQQSPQPLQSS). Over residues 906-915 (QQPPQPPQPV) the composition is skewed to pro residues. Positions 931-965 (QQQNGPTVPQQQQQQQQQQQQQQQQQQQQQQQQQP) are enriched in low complexity. The 205-residue stretch at 990-1194 (RFDAKLGKWV…ICHYLGLSSV (205 aa)) folds into the Alpha-type protein kinase domain. ATP is bound at residue 1164-1169 (GKGNLG). Disordered regions lie at residues 1198-1234 (PANDESGTMPRPPSIGQSYVRPSAFPPNLQQSFSFNF) and 1279-1352 (QQQQ…KLVS). Residues 1241–1320 (HVLEQLNQQQ…QQQQQQQQNG (80 aa)) are a coiled coil. A compositionally biased stretch (low complexity) spans 1279 to 1319 (QQQQQQQQQQQQQQQQNQQQNQQQNQQQQQQQQQQQQQQQN). A compositionally biased stretch (pro residues) spans 1321-1332 (HPPPQTPLPPTP). Over residues 1334–1352 (QKDKPKIEVFGDILRKLVS) the composition is skewed to basic and acidic residues.

The protein belongs to the protein kinase superfamily. Alpha-type protein kinase family. ALPK subfamily.

This is Alpha-protein kinase 1 (ak1) from Dictyostelium discoideum (Social amoeba).